Consider the following 181-residue polypeptide: Large ribosomal subunit protein uL10 (181 aa).

The protein belongs to the universal ribosomal protein uL10 family. Part of the ribosomal stalk of the 50S ribosomal subunit. The N-terminus interacts with L11 and the large rRNA to form the base of the stalk. The C-terminus forms an elongated spine to which L12 dimers bind in a sequential fashion forming a multimeric L10(L12)X complex.

In terms of biological role, forms part of the ribosomal stalk, playing a central role in the interaction of the ribosome with GTP-bound translation factors. The polypeptide is Large ribosomal subunit protein uL10 (Bradyrhizobium diazoefficiens (strain JCM 10833 / BCRC 13528 / IAM 13628 / NBRC 14792 / USDA 110)).